Consider the following 449-residue polypeptide: Sensor protein QseC (449 aa).

Residues 1 to 12 (MKFTQRLSLRVR) lie on the Cytoplasmic side of the membrane. A helical membrane pass occupies residues 13–33 (LTLIFLILASVTWLLSSFVAW). Residues 34–156 (KQTTDNVDEL…QEWEYREDMA (123 aa)) lie on the Periplasmic side of the membrane. A helical transmembrane segment spans residues 157 to 177 (LAIVAGQLIPWLVALPIMLII). Topologically, residues 178–449 (MMVLLGRELA…QGGFEAKVSW (272 aa)) are cytoplasmic. Positions 243–449 (DAAHELRSPL…QGGFEAKVSW (207 aa)) constitute a Histidine kinase domain. The residue at position 246 (His-246) is a Phosphohistidine; by autocatalysis.

The protein localises to the cell inner membrane. The catalysed reaction is ATP + protein L-histidine = ADP + protein N-phospho-L-histidine.. In terms of biological role, member of a two-component regulatory system QseB/QseC. Activates the flagella regulon by activating transcription of FlhDC. May activate QseB by phosphorylation. The chain is Sensor protein QseC (qseC) from Escherichia coli (strain K12).